The following is a 125-amino-acid chain: Photosystem II extrinsic protein U (125 aa).

Residues methionine 1 to alanine 29 form the signal peptide.

Belongs to the PsbU family. As to quaternary structure, PSII is composed of 1 copy each of membrane proteins PsbA, PsbB, PsbC, PsbD, PsbE, PsbF, PsbH, PsbI, PsbJ, PsbK, PsbL, PsbM, PsbT, PsbX, PsbY, PsbZ, Psb30/Ycf12, peripheral proteins PsbO, CyanoQ (PsbQ), PsbU, PsbV and a large number of cofactors. It forms dimeric complexes.

The protein localises to the cellular thylakoid membrane. One of the extrinsic, lumenal subunits of photosystem II (PSII). PSII is a light-driven water plastoquinone oxidoreductase, using light energy to abstract electrons from H(2)O, generating a proton gradient subsequently used for ATP formation. The extrinsic proteins stabilize the structure of photosystem II oxygen-evolving complex (OEC), the ion environment of oxygen evolution and protect the OEC against heat-induced inactivation. In Synechococcus sp. (strain CC9311), this protein is Photosystem II extrinsic protein U.